The chain runs to 745 residues: uncharacterized protein (745 aa).

The region spanning 158-256 (NQVCDYIELH…HQTPKQYRGD (99 aa)) is the HTH araC/xylS-type domain. DNA-binding regions (H-T-H motif) lie at residues 175–196 (SELS…TESL) and 223–246 (ITDI…KHFT).

This is an uncharacterized protein from Staphylococcus aureus (strain COL).